A 279-amino-acid polypeptide reads, in one-letter code: Proteasome subunit beta 2 (279 aa).

Residues 1-53 (MAAAFDPSGRFPDLFTSVGTSSFSAFLSKAAPELLPGRRPLPPGMATGLTPHA) constitute a propeptide, removed in mature form; by autocatalysis. Thr54 (nucleophile) is an active-site residue.

Belongs to the peptidase T1B family. In terms of assembly, the 20S proteasome core is composed of 14 alpha and 14 beta subunits that assemble into four stacked heptameric rings, resulting in a barrel-shaped structure. The two inner rings, each composed of seven catalytic beta subunits, are sandwiched by two outer rings, each composed of seven alpha subunits. The catalytic chamber with the active sites is on the inside of the barrel. Has a gated structure, the ends of the cylinder being occluded by the N-termini of the alpha-subunits. Is capped by the proteasome-associated ATPase, ARC.

The protein localises to the cytoplasm. It catalyses the reaction Cleavage of peptide bonds with very broad specificity.. It participates in protein degradation; proteasomal Pup-dependent pathway. The formation of the proteasomal ATPase ARC-20S proteasome complex, likely via the docking of the C-termini of ARC into the intersubunit pockets in the alpha-rings, may trigger opening of the gate for substrate entry. Interconversion between the open-gate and close-gate conformations leads to a dynamic regulation of the 20S proteasome proteolysis activity. Functionally, component of the proteasome core, a large protease complex with broad specificity involved in protein degradation. In Salinispora tropica (strain ATCC BAA-916 / DSM 44818 / JCM 13857 / NBRC 105044 / CNB-440), this protein is Proteasome subunit beta 2.